The sequence spans 512 residues: Cytochrome P450 1A1 (512 aa).

The segment at 29–40 is mitochondrial targeting signal; sequence SRPRVPKGLKNP. An O-linked (GlcNAc) serine glycan is attached at serine 67. Residue phenylalanine 224 participates in substrate binding. Position 457 (cysteine 457) interacts with heme.

This sequence belongs to the cytochrome P450 family. Interacts with cytosolic chaperones HSP70 and HSP90; this interaction is required for initial targeting to mitochondria. Interacts (via mitochondrial targeting signal) with TOMM40 (via N-terminus); this interaction is required for translocation across the mitochondrial outer membrane. It depends on heme as a cofactor.

It is found in the endoplasmic reticulum membrane. The protein localises to the mitochondrion inner membrane. The protein resides in the microsome membrane. Its subcellular location is the cytoplasm. It catalyses the reaction an organic molecule + reduced [NADPH--hemoprotein reductase] + O2 = an alcohol + oxidized [NADPH--hemoprotein reductase] + H2O + H(+). It carries out the reaction estrone + reduced [NADPH--hemoprotein reductase] + O2 = 2-hydroxyestrone + oxidized [NADPH--hemoprotein reductase] + H2O + H(+). The catalysed reaction is estrone + reduced [NADPH--hemoprotein reductase] + O2 = 4-hydroxyestrone + oxidized [NADPH--hemoprotein reductase] + H2O + H(+). The enzyme catalyses estrone + reduced [NADPH--hemoprotein reductase] + O2 = 6alpha-hydroxyestrone + oxidized [NADPH--hemoprotein reductase] + H2O + H(+). It catalyses the reaction estrone + reduced [NADPH--hemoprotein reductase] + O2 = 15alpha-hydroxyestrone + oxidized [NADPH--hemoprotein reductase] + H2O + H(+). It carries out the reaction estrone + reduced [NADPH--hemoprotein reductase] + O2 = 16alpha-hydroxyestrone + oxidized [NADPH--hemoprotein reductase] + H2O + H(+). The catalysed reaction is 17beta-estradiol + reduced [NADPH--hemoprotein reductase] + O2 = 2-hydroxy-17beta-estradiol + oxidized [NADPH--hemoprotein reductase] + H2O + H(+). The enzyme catalyses 17beta-estradiol + reduced [NADPH--hemoprotein reductase] + O2 = 4-hydroxy-17beta-estradiol + oxidized [NADPH--hemoprotein reductase] + H2O + H(+). It catalyses the reaction 17beta-estradiol + reduced [NADPH--hemoprotein reductase] + O2 = 6alpha-hydroxy-17beta-estradiol + oxidized [NADPH--hemoprotein reductase] + H2O + H(+). It carries out the reaction 17beta-estradiol + reduced [NADPH--hemoprotein reductase] + O2 = 7alpha-hydroxy-17beta-estradiol + oxidized [NADPH--hemoprotein reductase] + H2O + H(+). The catalysed reaction is 17beta-estradiol + reduced [NADPH--hemoprotein reductase] + O2 = 15alpha-hydroxy-17beta-estradiol + oxidized [NADPH--hemoprotein reductase] + H2O + H(+). The enzyme catalyses (5Z,8Z,11Z)-eicosatrienoate + reduced [NADPH--hemoprotein reductase] + O2 = 19-hydroxy-(5Z,8Z,11Z)-eicosatrienoate + oxidized [NADPH--hemoprotein reductase] + H2O + H(+). It catalyses the reaction (5Z,8Z,11Z,14Z)-eicosatetraenoate + reduced [NADPH--hemoprotein reductase] + O2 = 16-hydroxy-(5Z,8Z,11Z,14Z)-eicosatetraenoate + oxidized [NADPH--hemoprotein reductase] + H2O + H(+). It carries out the reaction (5Z,8Z,11Z,14Z)-eicosatetraenoate + reduced [NADPH--hemoprotein reductase] + O2 = 17-hydroxy-(5Z,8Z,11Z,14Z)-eicosatetraenoate + oxidized [NADPH--hemoprotein reductase] + H2O + H(+). The catalysed reaction is (5Z,8Z,11Z,14Z)-eicosatetraenoate + reduced [NADPH--hemoprotein reductase] + O2 = 18-hydroxy-(5Z,8Z,11Z,14Z)-eicosatetraenoate + oxidized [NADPH--hemoprotein reductase] + H2O + H(+). The enzyme catalyses (5Z,8Z,11Z,14Z)-eicosatetraenoate + reduced [NADPH--hemoprotein reductase] + O2 = 19-hydroxy-(5Z,8Z,11Z,14Z)-eicosatetraenoate + oxidized [NADPH--hemoprotein reductase] + H2O + H(+). It catalyses the reaction (5Z,8Z,11Z,14Z,17Z)-eicosapentaenoate + reduced [NADPH--hemoprotein reductase] + O2 = 19-hydroxy-(5Z,8Z,11Z,14Z,17Z)-eicosapentaenoate + oxidized [NADPH--hemoprotein reductase] + H2O + H(+). It carries out the reaction (5Z,8Z,11Z,14Z)-eicosatetraenoate + reduced [NADPH--hemoprotein reductase] + O2 = (8R,9S)-epoxy-(5Z,11Z,14Z)-eicosatrienoate + oxidized [NADPH--hemoprotein reductase] + H2O + H(+). The catalysed reaction is (5Z,8Z,11Z,14Z)-eicosatetraenoate + reduced [NADPH--hemoprotein reductase] + O2 = (11R,12S)-epoxy-(5Z,8Z,14Z)-eicosatrienoate + oxidized [NADPH--hemoprotein reductase] + H2O + H(+). The enzyme catalyses (5Z,8Z,11Z,14Z)-eicosatetraenoate + reduced [NADPH--hemoprotein reductase] + O2 = (14S,15R)-epoxy-(5Z,8Z,11Z)-eicosatrienoate + oxidized [NADPH--hemoprotein reductase] + H2O + H(+). It catalyses the reaction (5Z,8Z,11Z,14Z)-eicosatetraenoate + reduced [NADPH--hemoprotein reductase] + O2 = (14R,15S)-epoxy-(5Z,8Z,11Z)-eicosatrienoate + oxidized [NADPH--hemoprotein reductase] + H2O + H(+). It carries out the reaction (5Z,8Z,11Z,14Z,17Z)-eicosapentaenoate + reduced [NADPH--hemoprotein reductase] + O2 = (17R,18S)-epoxy-(5Z,8Z,11Z,14Z)-eicosatetraenoate + oxidized [NADPH--hemoprotein reductase] + H2O + H(+). The catalysed reaction is (4Z,7Z,10Z,13Z,16Z,19Z)-docosahexaenoate + reduced [NADPH--hemoprotein reductase] + O2 = (19S,20R)-epoxy-(4Z,7Z,10Z,13Z,16Z)-docosapentaenoate + oxidized [NADPH--hemoprotein reductase] + H2O + H(+). The enzyme catalyses (4Z,7Z,10Z,13Z,16Z,19Z)-docosahexaenoate + reduced [NADPH--hemoprotein reductase] + O2 = (19R,20S)-epoxy-(4Z,7Z,10Z,13Z,16Z)-docosapentaenoate + oxidized [NADPH--hemoprotein reductase] + H2O + H(+). It catalyses the reaction all-trans-retinol + reduced [NADPH--hemoprotein reductase] + O2 = all-trans-retinal + oxidized [NADPH--hemoprotein reductase] + 2 H2O + H(+). It carries out the reaction all-trans-retinal + reduced [NADPH--hemoprotein reductase] + O2 = all-trans-retinoate + oxidized [NADPH--hemoprotein reductase] + H2O + 2 H(+). The catalysed reaction is (13S)-hydroperoxy-(9Z,11E)-octadecadienoate = 13-oxo-(9Z,11E)-octadecadienoate + H2O. The enzyme catalyses (12S)-hydroperoxy-(5Z,8Z,10E,14Z)-eicosatetraenoate = 12-oxo-(5Z,8Z,10E,14Z)-eicosatetraenoate + H2O. It catalyses the reaction (15S)-hydroperoxy-(5Z,8Z,11Z,13E)-eicosatetraenoate = 15-oxo-(5Z,8Z,11Z,13E)-eicosatetraenoate + H2O. It carries out the reaction (5S)-hydroperoxy-(6E,8Z,11Z,14Z)-eicosatetraenoate = 5-oxo-(6E,8Z,11Z,14Z)-eicosatetraenoate + H2O. The protein operates within steroid hormone biosynthesis. It functions in the pathway lipid metabolism; fatty acid metabolism. Its pathway is cofactor metabolism; retinol metabolism. Its function is as follows. A cytochrome P450 monooxygenase involved in the metabolism of various endogenous substrates, including fatty acids, steroid hormones and vitamins. Mechanistically, uses molecular oxygen inserting one oxygen atom into a substrate, and reducing the second into a water molecule, with two electrons provided by NADPH via cytochrome P450 reductase (CPR; NADPH-ferrihemoprotein reductase). Catalyzes the hydroxylation of carbon-hydrogen bonds. Exhibits high catalytic activity for the formation of hydroxyestrogens from estrone (E1) and 17beta-estradiol (E2), namely 2-hydroxy E1 and E2, as well as D-ring hydroxylated E1 and E2 at the C15alpha and C16alpha positions. Displays different regioselectivities for polyunsaturated fatty acids (PUFA) hydroxylation. Catalyzes the epoxidation of double bonds of certain PUFA. Converts arachidonic acid toward epoxyeicosatrienoic acid (EET) regioisomers, 8,9-, 11,12-, and 14,15-EET, that function as lipid mediators in the vascular system. Displays an absolute stereoselectivity in the epoxidation of eicosapentaenoic acid (EPA) producing the 17(R),18(S) enantiomer. May play an important role in all-trans retinoic acid biosynthesis in extrahepatic tissues. Catalyzes two successive oxidative transformation of all-trans retinol to all-trans retinal and then to the active form all-trans retinoic acid. May also participate in eicosanoids metabolism by converting hydroperoxide species into oxo metabolites (lipoxygenase-like reaction, NADPH-independent). In Macaca fascicularis (Crab-eating macaque), this protein is Cytochrome P450 1A1 (CYP1A1).